Reading from the N-terminus, the 503-residue chain is Glutamate--tRNA ligase (503 aa).

A 'HIGH' region motif is present at residues 12–22; the sequence is PSPTGYLHVGG. Residues 259-263 carry the 'KMSKS' region motif; it reads KLSKR. Lysine 262 is an ATP binding site.

This sequence belongs to the class-I aminoacyl-tRNA synthetase family. Glutamate--tRNA ligase type 1 subfamily. As to quaternary structure, monomer.

The protein resides in the cytoplasm. The catalysed reaction is tRNA(Glu) + L-glutamate + ATP = L-glutamyl-tRNA(Glu) + AMP + diphosphate. Functionally, catalyzes the attachment of glutamate to tRNA(Glu) in a two-step reaction: glutamate is first activated by ATP to form Glu-AMP and then transferred to the acceptor end of tRNA(Glu). The polypeptide is Glutamate--tRNA ligase (Chloroherpeton thalassium (strain ATCC 35110 / GB-78)).